The primary structure comprises 149 residues: Inner membrane protein YfeZ (149 aa).

Topologically, residues 1 to 18 (MKSTEFHPVHYDAHGRLR) are cytoplasmic. Residues 19–39 (LPLLFWLVLLLQARTWVLFVI) traverse the membrane as a helical segment. Residues 40-58 (AGASREQGTALLNLFYPDH) lie on the Periplasmic side of the membrane. A helical membrane pass occupies residues 59–79 (DNFWLGLIPGIPAVLAFLLSG). The Cytoplasmic portion of the chain corresponds to 80–89 (RRATFPRTWR). Residues 90-110 (VLYFLLLLAQVVLLCWQPWLW) form a helical membrane-spanning segment. The Periplasmic segment spans residues 111–115 (LNGES). Residues 116–136 (VSGIGLALVVADIVALIWLLT) form a helical membrane-spanning segment. The Cytoplasmic portion of the chain corresponds to 137 to 149 (NRRLRACFYEVKE).

It localises to the cell inner membrane. The chain is Inner membrane protein YfeZ (yfeZ) from Escherichia coli (strain K12).